The primary structure comprises 272 residues: Ribosomal RNA small subunit methyltransferase A (272 aa).

S-adenosyl-L-methionine contacts are provided by Asn-18, Leu-20, Gly-45, Glu-66, Asp-91, and Asn-113.

The protein belongs to the class I-like SAM-binding methyltransferase superfamily. rRNA adenine N(6)-methyltransferase family. RsmA subfamily.

The protein localises to the cytoplasm. The catalysed reaction is adenosine(1518)/adenosine(1519) in 16S rRNA + 4 S-adenosyl-L-methionine = N(6)-dimethyladenosine(1518)/N(6)-dimethyladenosine(1519) in 16S rRNA + 4 S-adenosyl-L-homocysteine + 4 H(+). Specifically dimethylates two adjacent adenosines (A1518 and A1519) in the loop of a conserved hairpin near the 3'-end of 16S rRNA in the 30S particle. May play a critical role in biogenesis of 30S subunits. The polypeptide is Ribosomal RNA small subunit methyltransferase A (Photorhabdus laumondii subsp. laumondii (strain DSM 15139 / CIP 105565 / TT01) (Photorhabdus luminescens subsp. laumondii)).